The sequence spans 410 residues: MNQNHTLDNERNDDDEHSNNHVDTNDMKNFISCIKSKSNINDDKEDQQRPVRYLSRTVINSMTRGQLLELVKSMYSDRSDIYHMNSIQLLTLINKTIGHNGNYVQVVTKDYINDLNVTQLRIFCKELQLDTTHDVDRMNKPMLEILLKSYFKNNYPTSTNDDNDNENRSDDDDDDDDYRNDREEVEDSDINKNVNISSYNNEDIEEVDERTKSLKIDRRLLKMHQDNAKLVDKIDMLKNTIEDLQNRLLTAETTRDDILRRYSILENRENIRDDDDNRNSTTISNLQNLLNNANIAMTRSRINVADLTASLNERTKQLEDCLTRGREKDASIDKLNLKVTELEKLLQIQRDTHQDATLKISNIRMNDNNATRIQISSLNDELHRCQDQIKSTSITVYNRIYSDLYERLWS.

Disordered regions lie at residues 1–24 (MNQNHTLDNERNDDDEHSNNHVDT) and 156–197 (PTST…VNIS). The span at 161 to 188 (DDNDNENRSDDDDDDDDYRNDREEVEDS) shows a compositional bias: acidic residues.

The protein localises to the virion. The chain is Structural protein ORF142 from Trichoplusia ni ascovirus 2c (TnAV-2c).